The following is an 81-amino-acid chain: Photosystem I iron-sulfur center (81 aa).

2 4Fe-4S ferredoxin-type domains span residues 2–31 (SHSV…MIPW) and 39–68 (IASA…VRVY). Cys11, Cys14, Cys17, Cys21, Cys48, Cys51, Cys54, and Cys58 together coordinate [4Fe-4S] cluster.

The eukaryotic PSI reaction center is composed of at least 11 subunits. [4Fe-4S] cluster serves as cofactor.

The protein localises to the plastid. The protein resides in the chloroplast thylakoid membrane. The catalysed reaction is reduced [plastocyanin] + hnu + oxidized [2Fe-2S]-[ferredoxin] = oxidized [plastocyanin] + reduced [2Fe-2S]-[ferredoxin]. Functionally, apoprotein for the two 4Fe-4S centers FA and FB of photosystem I (PSI); essential for photochemical activity. FB is the terminal electron acceptor of PSI, donating electrons to ferredoxin. The C-terminus interacts with PsaA/B/D and helps assemble the protein into the PSI complex. Required for binding of PsaD and PsaE to PSI. PSI is a plastocyanin-ferredoxin oxidoreductase, converting photonic excitation into a charge separation, which transfers an electron from the donor P700 chlorophyll pair to the spectroscopically characterized acceptors A0, A1, FX, FA and FB in turn. This is Photosystem I iron-sulfur center from Helianthus annuus (Common sunflower).